A 244-amino-acid polypeptide reads, in one-letter code: Small ribosomal subunit protein uS3 (244 aa).

In terms of domain architecture, KH type-2 spans 38–106; the sequence is IRKYLNARLA…EVQINIFEVK (69 aa). Basic and acidic residues predominate over residues 222-235; sequence TGRRNDNAGGNRDK. The tract at residues 222–244 is disordered; that stretch reads TGRRNDNAGGNRDKNFKRKRANR.

Belongs to the universal ribosomal protein uS3 family. As to quaternary structure, part of the 30S ribosomal subunit. Forms a tight complex with proteins S10 and S14.

In terms of biological role, binds the lower part of the 30S subunit head. Binds mRNA in the 70S ribosome, positioning it for translation. In Parabacteroides distasonis (strain ATCC 8503 / DSM 20701 / CIP 104284 / JCM 5825 / NCTC 11152), this protein is Small ribosomal subunit protein uS3.